The following is a 213-amino-acid chain: 2,3-bisphosphoglycerate-dependent phosphoglycerate mutase (213 aa).

Substrate-binding positions include 8–15 (RHGQSEWN), 21–22 (TG), Arg58, 84–87 (ERNY), Lys95, 111–112 (RR), and 155–156 (GN). The active-site Tele-phosphohistidine intermediate is His9. Catalysis depends on Glu84, which acts as the Proton donor/acceptor.

The protein belongs to the phosphoglycerate mutase family. BPG-dependent PGAM subfamily.

It carries out the reaction (2R)-2-phosphoglycerate = (2R)-3-phosphoglycerate. The protein operates within carbohydrate degradation; glycolysis; pyruvate from D-glyceraldehyde 3-phosphate: step 3/5. Functionally, catalyzes the interconversion of 2-phosphoglycerate and 3-phosphoglycerate. The sequence is that of 2,3-bisphosphoglycerate-dependent phosphoglycerate mutase from Cytophaga hutchinsonii (strain ATCC 33406 / DSM 1761 / CIP 103989 / NBRC 15051 / NCIMB 9469 / D465).